The following is a 466-amino-acid chain: MFNIDEIYTISNFLFLCNKTIEDKIPTCWLQGEISNLTRPESGHWYFSLKDSKAQVYCVLFRFNQRHIKFNPKNGMEVLVHVTPTLYKARGNFQLIIQHLEPVGIGNLNLAFEQLKNKLVNEGLFDNIHKKPLPNIINTIGVISSSTGAVIQDIIKVLNNRYPFSDILLFDSMVQGQGSVKKLTNALNAADQSGKCDVIIIARGGGSLEDLWAFNEETLARAIFKASTPIISAIGHETDTTISDFVCDICAPTPSAAAMLVTPDRLELLANTDKLYMRLHQSYQQTLHDYQSVLNQLKLRIPISNKQIAFFSQKLDHVSINLNNHVKSTLVLNNAKLNSIFSALKQHSPIEAIKHIKILNQVSFAQLKHQIKQIININNSALYLANEKLKKAIATLTDKHKTTLSIQANSLHHLSPLNTLSRGFSITTNAKNQILSSITDIKINQAITTQLADGKLYSNIKKIEKN.

The protein belongs to the XseA family. In terms of assembly, heterooligomer composed of large and small subunits.

The protein resides in the cytoplasm. The catalysed reaction is Exonucleolytic cleavage in either 5'- to 3'- or 3'- to 5'-direction to yield nucleoside 5'-phosphates.. In terms of biological role, bidirectionally degrades single-stranded DNA into large acid-insoluble oligonucleotides, which are then degraded further into small acid-soluble oligonucleotides. This Ruthia magnifica subsp. Calyptogena magnifica protein is Exodeoxyribonuclease 7 large subunit.